Reading from the N-terminus, the 476-residue chain is UDP-N-acetylmuramate--L-alanine ligase (476 aa).

107–113 (GTHGKTT) contributes to the ATP binding site.

The protein belongs to the MurCDEF family.

The protein resides in the cytoplasm. The enzyme catalyses UDP-N-acetyl-alpha-D-muramate + L-alanine + ATP = UDP-N-acetyl-alpha-D-muramoyl-L-alanine + ADP + phosphate + H(+). It functions in the pathway cell wall biogenesis; peptidoglycan biosynthesis. In terms of biological role, cell wall formation. In Roseiflexus castenholzii (strain DSM 13941 / HLO8), this protein is UDP-N-acetylmuramate--L-alanine ligase.